A 325-amino-acid chain; its full sequence is Glutarate 2-hydroxylase (325 aa).

Fe cation contacts are provided by His160, Asp162, and His292.

The protein belongs to the glutarate hydroxylase family. In terms of assembly, homotetramer. Requires Fe(2+) as cofactor.

The enzyme catalyses glutarate + 2-oxoglutarate + O2 = (S)-2-hydroxyglutarate + succinate + CO2. Its pathway is amino-acid degradation. In terms of biological role, acts as an alpha-ketoglutarate-dependent dioxygenase catalyzing hydroxylation of glutarate (GA) to L-2-hydroxyglutarate (L2HG). Functions in a L-lysine degradation pathway that proceeds via cadaverine, glutarate and L-2-hydroxyglutarate. The polypeptide is Glutarate 2-hydroxylase (Escherichia fergusonii (strain ATCC 35469 / DSM 13698 / CCUG 18766 / IAM 14443 / JCM 21226 / LMG 7866 / NBRC 102419 / NCTC 12128 / CDC 0568-73)).